A 258-amino-acid polypeptide reads, in one-letter code: Snake venom serine proteinase 8 (258 aa).

The N-terminal stretch at 1–18 is a signal peptide; it reads MVLIRVLANLLILQLSYA. Positions 19–24 are excised as a propeptide; it reads QKSSEL. In terms of domain architecture, Peptidase S1 spans 25–249; it reads VIGGDECNIN…YNDWIQSIIA (225 aa). 6 disulfides stabilise this stretch: cysteine 31–cysteine 163, cysteine 50–cysteine 66, cysteine 98–cysteine 256, cysteine 142–cysteine 210, cysteine 174–cysteine 189, and cysteine 200–cysteine 225. An N-linked (GlcNAc...) asparagine glycan is attached at asparagine 44. Residues histidine 65 and aspartate 110 each act as charge relay system in the active site. Serine 204 functions as the Charge relay system in the catalytic mechanism.

The protein belongs to the peptidase S1 family. Snake venom subfamily. In terms of assembly, monomer. Expressed by the venom gland.

The protein localises to the secreted. Its function is as follows. Snake venom serine protease that may act in the hemostasis system of the prey. In Crotalus adamanteus (Eastern diamondback rattlesnake), this protein is Snake venom serine proteinase 8.